The chain runs to 244 residues: Probable ABC transporter ATP-binding protein p29 (244 aa).

The ABC transporter domain maps to 6 to 241 (LVFDQVSLRY…KLTKQKLMQI (236 aa)). 38–45 (GKSGVGKT) serves as a coordination point for ATP.

Belongs to the ABC transporter superfamily.

Functionally, part of a high-affinity transport system. The sequence is that of Probable ABC transporter ATP-binding protein p29 (p29) from Mycoplasma pneumoniae (strain ATCC 29342 / M129 / Subtype 1) (Mycoplasmoides pneumoniae).